Reading from the N-terminus, the 249-residue chain is uncharacterized protein (249 aa).

It localises to the cytoplasm. It is found in the nucleus. The protein resides in the nucleolus. This is an uncharacterized protein from Schizosaccharomyces pombe (strain 972 / ATCC 24843) (Fission yeast).